The following is a 318-amino-acid chain: Probable ABC transporter permease protein MG189 (318 aa).

6 helical membrane-spanning segments follow: residues 42–62 (VLGF…VVSF), 98–118 (AIVV…FFTI), 134–154 (LVWF…LIGQ), 169–189 (PLIV…GFMY), 230–250 (VGIL…LLLG), and 282–302 (LKMS…FLFH). In terms of domain architecture, ABC transmembrane type-1 spans 99–301 (IVVNTLVTVL…LPMFIIYFLF (203 aa)).

This sequence belongs to the binding-protein-dependent transport system permease family. MalFG subfamily.

The protein localises to the cell membrane. Probably part of a binding-protein-dependent transport system. Probably responsible for the translocation of the substrate across the membrane. The chain is Probable ABC transporter permease protein MG189 from Mycoplasma genitalium (strain ATCC 33530 / DSM 19775 / NCTC 10195 / G37) (Mycoplasmoides genitalium).